The following is a 340-amino-acid chain: MSTPRAAASLAKKAALVALAVLAAALATAARAEQCGAQAGGARCPNCLCCSRWGWCGTTSDFCGDGCQSQCSGCGPTPTPTPPSPSDGVGSIVPRDLFERLLLHRNDGACPARGFYTYEAFLAAAAAFPAFGGTGNTETRKREVAAFLGQTSHETTGGWPTAPDGPFSWGYCFKQEQNPPSDYCQPSPEWPCAPGRKYYGRGPIQLSFNFNYGPAGRAIGVDLLSNPDLVATDATVSFKTALWFWMTPQGNKPSSHDVITGRWAPSPADAAAGRAPGYGVITNIVNGGLECGHGPDDRVANRIGFYQRYCGAFGIGTGGNLDCYNQRPFNSGSSVGLAEQ.

The signal sequence occupies residues 1 to 32; that stretch reads MSTPRAAASLAKKAALVALAVLAAALATAARA. One can recognise a Chitin-binding type-1 domain in the interval 33–73; that stretch reads EQCGAQAGGARCPNCLCCSRWGWCGTTSDFCGDGCQSQCSG. Cystine bridges form between Cys-35-Cys-50, Cys-44-Cys-56, Cys-47-Cys-74, Cys-49-Cys-63, Cys-67-Cys-71, Cys-110-Cys-172, Cys-184-Cys-192, and Cys-291-Cys-323. The active-site Proton donor is Glu-154.

Belongs to the glycosyl hydrolase 19 family. Chitinase class I subfamily. In terms of tissue distribution, expressed in roots, sheaths and meristems.

It carries out the reaction Random endo-hydrolysis of N-acetyl-beta-D-glucosaminide (1-&gt;4)-beta-linkages in chitin and chitodextrins.. In terms of biological role, hydrolyzes chitin and plays a role in defense against fungal pathogens containing chitin. Its overexpression confers enhanced resistance to sheath blight pathogen (R.solani). The chain is Chitinase 2 (Cht2) from Oryza sativa subsp. japonica (Rice).